The chain runs to 285 residues: Probable endonuclease 4 (285 aa).

Zn(2+)-binding residues include H69, H109, E145, D179, H182, H216, D229, H231, and E261.

This sequence belongs to the AP endonuclease 2 family. Zn(2+) serves as cofactor.

The catalysed reaction is Endonucleolytic cleavage to 5'-phosphooligonucleotide end-products.. Endonuclease IV plays a role in DNA repair. It cleaves phosphodiester bonds at apurinic or apyrimidinic (AP) sites, generating a 3'-hydroxyl group and a 5'-terminal sugar phosphate. In Shigella boydii serotype 18 (strain CDC 3083-94 / BS512), this protein is Probable endonuclease 4.